Reading from the N-terminus, the 344-residue chain is Phenylalanine--tRNA ligase alpha subunit (344 aa).

Glu-258 contributes to the Mg(2+) binding site.

This sequence belongs to the class-II aminoacyl-tRNA synthetase family. Phe-tRNA synthetase alpha subunit type 1 subfamily. In terms of assembly, tetramer of two alpha and two beta subunits. Mg(2+) is required as a cofactor.

It is found in the cytoplasm. It carries out the reaction tRNA(Phe) + L-phenylalanine + ATP = L-phenylalanyl-tRNA(Phe) + AMP + diphosphate + H(+). This chain is Phenylalanine--tRNA ligase alpha subunit, found in Thiobacillus denitrificans (strain ATCC 25259 / T1).